Consider the following 210-residue polypeptide: Probable HTH-type transcriptional regulator ArpR (210 aa).

Positions 10–70 (QETRAQIIEA…ALLDSLHETH (61 aa)) constitute an HTH tetR-type domain. The segment at residues 33-52 (TLADIAELAGVTRGAIYWHF) is a DNA-binding region (H-T-H motif).

Probable regulatory protein for the antibiotic efflux pump arpABC operon. May function as a repressor. This chain is Probable HTH-type transcriptional regulator ArpR (arpR), found in Pseudomonas putida (Arthrobacter siderocapsulatus).